The sequence spans 276 residues: Small ribosomal subunit protein uS2 (276 aa).

2 disordered regions span residues 209-233 (AQEAAAAAQAAKETAEPTTEGAADV) and 252-276 (VDWSAEGAQDWAADGAAEQATSSWE). Over residues 211–231 (EAAAAAQAAKETAEPTTEGAA) the composition is skewed to low complexity.

The protein belongs to the universal ribosomal protein uS2 family. As to quaternary structure, component of the small ribosomal subunit. Mature ribosomes consist of a small (40S) and a large (60S) subunit. The 40S subunit contains about 33 different proteins and 1 molecule of RNA (18S). The 60S subunit contains about 49 different proteins and 3 molecules of RNA (25S, 5.8S and 5S). Interacts with RPS21.

The protein localises to the cytoplasm. Required for the assembly and/or stability of the 40S ribosomal subunit. Required for the processing of the 20S rRNA-precursor to mature 18S rRNA in a late step of the maturation of 40S ribosomal subunits. This chain is Small ribosomal subunit protein uS2, found in Mycosarcoma maydis (Corn smut fungus).